Reading from the N-terminus, the 492-residue chain is GPI alpha-1,6-mannosyltransferase 2 (492 aa).

Residues 1–13 (MGLLDPSQKEVLK) lie on the Cytoplasmic side of the membrane. Residues 14–34 (FAVSCRILTLVLQALFNIIIP) traverse the membrane as a helical segment. At 35 to 77 (DHHADAFSPPRLAPSGSVDQLVEALLGGLSRWDAEHFLFIAEH) the chain is on the lumenal side. Residues 78 to 98 (GYLYEHNFAFFPGFPLALLMG) form a helical membrane-spanning segment. Over 99-113 (TELLRPLQGLLSERS) the chain is Cytoplasmic. The chain crosses the membrane as a helical span at residues 114 to 134 (CLLVSVALLNSLFSVLAAVAL). Topologically, residues 135 to 136 (HD) are lumenal. The chain crosses the membrane as a helical span at residues 137–157 (LGCLVLHCPRQAFCAALLFCL). Over 158-161 (SPAN) the chain is Cytoplasmic. Residues 162–182 (VFLAAGYSEALFAFLTFSAMG) form a helical membrane-spanning segment. Topologically, residues 183–192 (QLERGRGWAS) are lumenal. The chain crosses the membrane as a helical span at residues 193–213 (GLLFALAAGVRSNGLVSVGFL). The Cytoplasmic portion of the chain corresponds to 214 to 234 (LHSQCRGFCSSLVVLDPLKGL). A helical membrane pass occupies residues 235–255 (VKLMASLCLSVLTVSLPFALF). The Lumenal portion of the chain corresponds to 256–327 (QYYAYTQFCF…RYYELRQVPN (72 aa)). The chain crosses the membrane as a helical span at residues 328–348 (FLLATPVTVLVVWATWTYVTA). Residues 349 to 378 (HPWLCLTLGLQRTKDRESLEKPHPGFLSAK) are Cytoplasmic-facing. Residues 379-399 (VFVYLVHAAALLAFGGLCMHV) traverse the membrane as a helical segment. Residues 400–468 (QVLTRLLGSS…NWKTCSPVTK (69 aa)) lie on the Lumenal side of the membrane. The helical transmembrane segment at 469–489 (CILVYFLTYWLLGLIMHCNFL) threads the bilayer. Topologically, residues 490 to 492 (PWT) are cytoplasmic.

The protein belongs to the PIGV family. In terms of processing, not N-glycosylated.

It is found in the endoplasmic reticulum membrane. It participates in glycolipid biosynthesis; glycosylphosphatidylinositol-anchor biosynthesis. Alpha-1,6-mannosyltransferase that catalyzes the transfer of the second mannose, via an alpha-1,6 bond, from a dolichol-phosphate-mannose (Dol-P-Man) to the alpha-D-Man-(1-&gt;4)-alpha-D-GlcN-(1-&gt;6)-(1-radyl,2-acyl-sn-glycero-3-phospho)-2-acyl-inositol (also termed H2) intermediate to generate an alpha-D-Man-(1-&gt;6)-alpha-D-Man-(1-&gt;4)-alpha-D-GlcN-(1-&gt;6)-(1-radyl,2-acyl-sn-glycero-3-phospho)-2-acyl-inositol (also termed H3) and participates in the seventh step of the glycosylphosphatidylinositol-anchor biosynthesis. Also transfers the second mannose on a 2-PEtn-alpha-D-Man-(1-&gt;4)-alpha-D-GlcN-(1-&gt;6)-(1-radyl,2-acyl-sn-glycero-3-phospho)-2-acyl-inositol (also termed H5). The sequence is that of GPI alpha-1,6-mannosyltransferase 2 from Rattus norvegicus (Rat).